We begin with the raw amino-acid sequence, 165 residues long: Protein C2-DOMAIN ABA-RELATED 7 (165 aa).

Methionine 1 carries the N-acetylmethionine modification. Positions 1–106 (MEELVGLLRI…HKMGLQELPD (106 aa)) constitute a C2 domain. Residues arginine 21, aspartate 22, aspartate 27, aspartate 73, lysine 74, aspartate 75, and aspartate 81 each coordinate Ca(2+).

It belongs to the plant CAR protein family. In terms of assembly, binds to PYR/PYL/RCAR abscisic acid intracellular receptors in an ABA-independent manner, both at the plasma membrane and in the nucleus.

Its subcellular location is the cell membrane. It is found in the nucleus. Functionally, stimulates the GTPase/ATPase activities of Obg-like ATPases. Mediates the transient calcium-dependent interaction of PYR/PYL/RCAR abscisic acid (ABA) receptors with the plasma membrane and thus regulates ABA sensitivity. The protein is Protein C2-DOMAIN ABA-RELATED 7 of Arabidopsis thaliana (Mouse-ear cress).